Consider the following 510-residue polypeptide: Beta-glucosidase 26 (510 aa).

An N-terminal signal peptide occupies residues 1-27 (MRKFIAALRLALAAAAHLLLTLPPAQC). Gln-59 serves as a coordination point for a beta-D-glucoside. Asn-87 and Asn-127 each carry an N-linked (GlcNAc...) asparagine glycan. A beta-D-glucoside is bound by residues His-160 and 205–206 (NE). The active-site Proton donor is Glu-206. Cys-225 and Cys-228 form a disulfide bridge. Asn-233 carries N-linked (GlcNAc...) asparagine glycosylation. A beta-D-glucoside contacts are provided by Tyr-345 and Glu-416. Glu-416 functions as the Nucleophile in the catalytic mechanism. N-linked (GlcNAc...) asparagine glycosylation occurs at Asn-424. Residues Trp-463, 470 to 471 (EW), and Phe-479 contribute to the a beta-D-glucoside site.

It belongs to the glycosyl hydrolase 1 family.

The catalysed reaction is Hydrolysis of terminal, non-reducing beta-D-glucosyl residues with release of beta-D-glucose.. Its function is as follows. Hydrolyzes p-nitrophenyl beta-D-glucoside, p-nitrophenyl beta-D-mannoside, p-nitrophenyl beta-D-galactoside, p-nitrophenyl beta-D-xyloside, p-nitrophenyl beta-D-fucoside, p-nitrophenyl beta-L-arabinoside, cello-oligosaccharides, laminari-oligosaccharides and sophorose. The chain is Beta-glucosidase 26 (BGLU26) from Oryza sativa subsp. japonica (Rice).